Consider the following 303-residue polypeptide: MAGREDGAAAGAMEEGQDSKEVKCESSEDGSSSSSSSRCHGNDVISVQFMQKVHPWCMCMNKNLLILAEILGTYFMIFAGCGAVVVNQSTGGAVTFPGICAVWGLVVMVLVYTVSHISGAHFNPAVTVAFATCGRFRWKQVPSYVVAQVLGSTMASLTLRVVFGGGGGGARGEHLFFGTTPAGSMAQAAALEFVISFFLMFVVSGVATDNRAIGELAGLAVGATVAVNVLFAGPVTGASMNPARSLGPAMVAGRYGGVWVYVAAPVSGTVCGAWAYNLLRFTDKPLRDIANTASFLRRSSRRS.

Residues 1-39 (MAGREDGAAAGAMEEGQDSKEVKCESSEDGSSSSSSSRC) form a disordered region. Residues 17–26 (QDSKEVKCES) show a composition bias toward basic and acidic residues. The next 2 helical transmembrane spans lie at 66–86 (ILAEILGTYFMIFAGCGAVVV) and 91–111 (GGAVTFPGICAVWGLVVMVLV). The NPA 1 motif lies at 123–125 (NPA). Transmembrane regions (helical) follow at residues 145–165 (VVAQVLGSTMASLTLRVVFGG), 188–208 (AAALEFVISFFLMFVVSGVAT), and 212–232 (AIGELAGLAVGATVAVNVLFA). The short motif at 241–243 (NPA) is the NPA 2 element. The helical transmembrane segment at 255-275 (YGGVWVYVAAPVSGTVCGAWA) threads the bilayer.

It belongs to the MIP/aquaporin (TC 1.A.8) family. NIP (TC 1.A.8.12) subfamily. In terms of tissue distribution, expressed in roots and leaves, and at lower levels in anthers.

The protein localises to the membrane. Aquaporins facilitate the transport of water and small neutral solutes across cell membranes. The sequence is that of Aquaporin NIP1-2 (NIP1-2) from Oryza sativa subsp. japonica (Rice).